The chain runs to 227 residues: Cytochrome c oxidase subunit 2 (227 aa).

The Mitochondrial intermembrane portion of the chain corresponds to 1–26; sequence MSTWKNLFLQDSASPLMELLMCFHDH. The chain crosses the membrane as a helical span at residues 27–48; that stretch reads AMLILILITIMVSQMLLSMLFN. The Mitochondrial matrix portion of the chain corresponds to 49–62; sequence KLSHRYLLEGQLIE. A helical membrane pass occupies residues 63–82; that stretch reads TIWTIIPAIILILIALPSLR. Residues 83–227 lie on the Mitochondrial intermembrane side of the membrane; the sequence is LLYILDEINN…LFLNWVISKA (145 aa). Residues His161, Cys196, Glu198, Cys200, His204, and Met207 each contribute to the Cu cation site. Position 198 (Glu198) interacts with Mg(2+).

It belongs to the cytochrome c oxidase subunit 2 family. Component of the cytochrome c oxidase (complex IV, CIV), a multisubunit enzyme composed of a catalytic core of 3 subunits and several supernumerary subunits. The complex exists as a monomer or a dimer and forms supercomplexes (SCs) in the inner mitochondrial membrane with ubiquinol-cytochrome c oxidoreductase (cytochrome b-c1 complex, complex III, CIII). Cu cation serves as cofactor.

The protein resides in the mitochondrion inner membrane. The catalysed reaction is 4 Fe(II)-[cytochrome c] + O2 + 8 H(+)(in) = 4 Fe(III)-[cytochrome c] + 2 H2O + 4 H(+)(out). Component of the cytochrome c oxidase, the last enzyme in the mitochondrial electron transport chain which drives oxidative phosphorylation. The respiratory chain contains 3 multisubunit complexes succinate dehydrogenase (complex II, CII), ubiquinol-cytochrome c oxidoreductase (cytochrome b-c1 complex, complex III, CIII) and cytochrome c oxidase (complex IV, CIV), that cooperate to transfer electrons derived from NADH and succinate to molecular oxygen, creating an electrochemical gradient over the inner membrane that drives transmembrane transport and the ATP synthase. Cytochrome c oxidase is the component of the respiratory chain that catalyzes the reduction of oxygen to water. Electrons originating from reduced cytochrome c in the intermembrane space (IMS) are transferred via the dinuclear copper A center (CU(A)) of subunit 2 and heme A of subunit 1 to the active site in subunit 1, a binuclear center (BNC) formed by heme A3 and copper B (CU(B)). The BNC reduces molecular oxygen to 2 water molecules using 4 electrons from cytochrome c in the IMS and 4 protons from the mitochondrial matrix. The protein is Cytochrome c oxidase subunit 2 (COII) of Sitophilus granarius (Granary weevil).